The sequence spans 120 residues: MQRSSVLLCLLVIEATFCSLLMAQPDGVNTPTCCYTFNKQIPLKRVKGYERITSSRCPQEAVIFRTLKNKEVCADPTQKWVQDYIAKLDQRTQQKQNSTAPQTSKPLNIRFTTQDPKNRS.

An N-terminal signal peptide occupies residues 1–23 (MQRSSVLLCLLVIEATFCSLLMA). Position 24 is a pyrrolidone carboxylic acid (glutamine 24). Cystine bridges form between cysteine 33/cysteine 57 and cysteine 34/cysteine 73. The segment at 91-120 (RTQQKQNSTAPQTSKPLNIRFTTQDPKNRS) is disordered. Residues 93–120 (QQKQNSTAPQTSKPLNIRFTTQDPKNRS) are compositionally biased toward polar residues. Asparagine 97 carries an N-linked (GlcNAc...) asparagine glycan.

The protein belongs to the intercrine beta (chemokine CC) family. Monomer or homodimer; in equilibrium. Is tethered on endothelial cells by glycosaminoglycan (GAG) side chains of proteoglycans. Interacts with TNFAIP6 (via Link domain). In terms of processing, processing at the N-terminus can regulate receptor and target cell selectivity. Deletion of the N-terminal residue converts it from an activator of basophil to an eosinophil chemoattractant. Post-translationally, N-Glycosylated.

It localises to the secreted. In terms of biological role, acts as a ligand for C-C chemokine receptor CCR2. Signals through binding and activation of CCR2 and induces a strong chemotactic response and mobilization of intracellular calcium ions. Exhibits a chemotactic activity for monocytes and basophils but not neutrophils or eosinophils. Plays an important role in mediating peripheral nerve injury-induced neuropathic pain. Increases NMDA-mediated synaptic transmission in both dopamine D1 and D2 receptor-containing neurons, which may be caused by MAPK/ERK-dependent phosphorylation of GRIN2B/NMDAR2B. The chain is C-C motif chemokine 2 (CCL2) from Cavia porcellus (Guinea pig).